The following is a 438-amino-acid chain: UDP-N-acetylmuramoylalanine--D-glutamate ligase (438 aa).

112–118 (GSNGKST) is a binding site for ATP.

Belongs to the MurCDEF family.

It is found in the cytoplasm. The enzyme catalyses UDP-N-acetyl-alpha-D-muramoyl-L-alanine + D-glutamate + ATP = UDP-N-acetyl-alpha-D-muramoyl-L-alanyl-D-glutamate + ADP + phosphate + H(+). It functions in the pathway cell wall biogenesis; peptidoglycan biosynthesis. In terms of biological role, cell wall formation. Catalyzes the addition of glutamate to the nucleotide precursor UDP-N-acetylmuramoyl-L-alanine (UMA). In Salmonella choleraesuis (strain SC-B67), this protein is UDP-N-acetylmuramoylalanine--D-glutamate ligase.